Here is a 345-residue protein sequence, read N- to C-terminus: Photosystem II protein D1 (345 aa).

A run of 3 helical transmembrane segments spans residues Y30–T47, H119–L134, and W143–A157. H119 contributes to the chlorophyll a binding site. Y127 contacts pheophytin a. [CaMn4O5] cluster contacts are provided by D171 and E190. The chain crosses the membrane as a helical span at residues F198–L219. Residue H199 participates in chlorophyll a binding. A quinone contacts are provided by residues H216 and S265–F266. Residue H216 participates in Fe cation binding. A Fe cation-binding site is contributed by H273. A helical transmembrane segment spans residues F275–L289. [CaMn4O5] cluster-binding residues include H333, E334, D343, and A345.

It belongs to the reaction center PufL/M/PsbA/D family. In terms of assembly, PSII is composed of 1 copy each of membrane proteins PsbA, PsbB, PsbC, PsbD, PsbE, PsbF, PsbH, PsbI, PsbJ, PsbK, PsbL, PsbM, PsbT, PsbY, PsbZ, Psb30/Ycf12, at least 3 peripheral proteins of the oxygen-evolving complex and a large number of cofactors. It forms dimeric complexes. Requires The D1/D2 heterodimer binds P680, chlorophylls that are the primary electron donor of PSII, and subsequent electron acceptors. It shares a non-heme iron and each subunit binds pheophytin, quinone, additional chlorophylls, carotenoids and lipids. D1 provides most of the ligands for the Mn4-Ca-O5 cluster of the oxygen-evolving complex (OEC). There is also a Cl(-1) ion associated with D1 and D2, which is required for oxygen evolution. The PSII complex binds additional chlorophylls, carotenoids and specific lipids. as cofactor. Post-translationally, tyr-162 forms a radical intermediate that is referred to as redox-active TyrZ, YZ or Y-Z.

The protein localises to the plastid. It is found in the chloroplast thylakoid membrane. It carries out the reaction 2 a plastoquinone + 4 hnu + 2 H2O = 2 a plastoquinol + O2. Photosystem II (PSII) is a light-driven water:plastoquinone oxidoreductase that uses light energy to abstract electrons from H(2)O, generating O(2) and a proton gradient subsequently used for ATP formation. It consists of a core antenna complex that captures photons, and an electron transfer chain that converts photonic excitation into a charge separation. The D1/D2 (PsbA/PsbD) reaction center heterodimer binds P680, the primary electron donor of PSII as well as several subsequent electron acceptors. The protein is Photosystem II protein D1 of Euglena gracilis.